We begin with the raw amino-acid sequence, 61 residues long: Protein translocase subunit SecE (61 aa).

The chain crosses the membrane as a helical span at residues 38 to 58 (GIGMILIGLIGLVIRMIGYLI).

This sequence belongs to the SecE/SEC61-gamma family. In terms of assembly, component of the Sec protein translocase complex. Heterotrimer consisting of SecY (alpha), SecG (beta) and SecE (gamma) subunits. The heterotrimers can form oligomers, although 1 heterotrimer is thought to be able to translocate proteins. Interacts with the ribosome. May interact with SecDF, and other proteins may be involved.

It is found in the cell membrane. In terms of biological role, essential subunit of the Sec protein translocation channel SecYEG. Clamps together the 2 halves of SecY. May contact the channel plug during translocation. This chain is Protein translocase subunit SecE, found in Thermococcus onnurineus (strain NA1).